The primary structure comprises 183 residues: Putative manganese efflux pump MntP (183 aa).

6 helical membrane passes run 8-28, 40-60, 72-92, 108-128, 133-153, and 163-183; these read IIAL…VALG, FYIG…GMAV, ATYA…IASF, LFFA…LGIF, MVTI…GLFV, and SYSE…LLFL.

This sequence belongs to the MntP (TC 9.B.29) family.

It is found in the cell membrane. Functionally, probably functions as a manganese efflux pump. In Geobacillus kaustophilus (strain HTA426), this protein is Putative manganese efflux pump MntP.